Consider the following 397-residue polypeptide: Tauropine dehydrogenase (397 aa).

Belongs to the lysopine/nopaline/octopine/opine/vitopine dehydrogenases family.

The catalysed reaction is tauropine + NAD(+) + H2O = taurine + pyruvate + NADH + H(+). Subject to substrate inhibition by pyruvate for the reverse reaction but not for the forward reaction of the tauropine dehydrogenase activity. In terms of biological role, may play a role in maintaining a redox balance during environmental and functional hypoxia. Exhibits high specificity for taurine and in addition, requires both alpha amino group and C-2 carbon chain length as a critical factor for active site binding of the amino acid. A methyl group in the beta position may be critical for active site binding of the keto acid. In the reverse reaction requires NAD(H) for the activity but not NADP(H). The protein is Tauropine dehydrogenase of Arabella iricolor (Opal worm).